The sequence spans 216 residues: Cytidylate kinase (216 aa).

10 to 18 (GPAAAGKST) lines the ATP pocket.

The protein belongs to the cytidylate kinase family. Type 1 subfamily.

It localises to the cytoplasm. It catalyses the reaction CMP + ATP = CDP + ADP. The catalysed reaction is dCMP + ATP = dCDP + ADP. This chain is Cytidylate kinase, found in Macrococcus caseolyticus (strain JCSC5402) (Macrococcoides caseolyticum).